An 82-amino-acid polypeptide reads, in one-letter code: Small ribosomal subunit protein bS16 (82 aa).

This sequence belongs to the bacterial ribosomal protein bS16 family.

This chain is Small ribosomal subunit protein bS16, found in Klebsiella pneumoniae (strain 342).